Consider the following 425-residue polypeptide: Riboflavin biosynthesis protein RibBA (425 aa).

Residues 1–204 (MTRLDSVERA…IADLIEWRRK (204 aa)) form a DHBP synthase region. D-ribulose 5-phosphate-binding positions include 28–29 (RE), D33, 141–145 (RPGHT), and E165. E29 contacts Mg(2+). H144 is a Mg(2+) binding site. Residues 205 to 425 (HEKHIERVAE…HLPGEFGGAL (221 aa)) form a GTP cyclohydrolase II region. 259–263 (RVHSE) lines the GTP pocket. Positions 264, 275, and 277 each coordinate Zn(2+). GTP-binding positions include Q280, 303–305 (EGR), and T325. D337 functions as the Proton acceptor; for GTP cyclohydrolase activity in the catalytic mechanism. The Nucleophile; for GTP cyclohydrolase activity role is filled by R339. Positions 360 and 365 each coordinate GTP.

It in the N-terminal section; belongs to the DHBP synthase family. The protein in the C-terminal section; belongs to the GTP cyclohydrolase II family. The cofactor is Mg(2+). Requires Mn(2+) as cofactor. Zn(2+) serves as cofactor.

The enzyme catalyses D-ribulose 5-phosphate = (2S)-2-hydroxy-3-oxobutyl phosphate + formate + H(+). It catalyses the reaction GTP + 4 H2O = 2,5-diamino-6-hydroxy-4-(5-phosphoribosylamino)-pyrimidine + formate + 2 phosphate + 3 H(+). It participates in cofactor biosynthesis; riboflavin biosynthesis; 2-hydroxy-3-oxobutyl phosphate from D-ribulose 5-phosphate: step 1/1. It functions in the pathway cofactor biosynthesis; riboflavin biosynthesis; 5-amino-6-(D-ribitylamino)uracil from GTP: step 1/4. In terms of biological role, catalyzes the conversion of D-ribulose 5-phosphate to formate and 3,4-dihydroxy-2-butanone 4-phosphate. Its function is as follows. Catalyzes the conversion of GTP to 2,5-diamino-6-ribosylamino-4(3H)-pyrimidinone 5'-phosphate (DARP), formate and pyrophosphate. This is Riboflavin biosynthesis protein RibBA from Mycobacterium bovis (strain ATCC BAA-935 / AF2122/97).